A 501-amino-acid polypeptide reads, in one-letter code: Probable malate:quinone oxidoreductase (501 aa).

It belongs to the MQO family. FAD serves as cofactor.

The catalysed reaction is (S)-malate + a quinone = a quinol + oxaloacetate. Its pathway is carbohydrate metabolism; tricarboxylic acid cycle; oxaloacetate from (S)-malate (quinone route): step 1/1. This chain is Probable malate:quinone oxidoreductase, found in Paenarthrobacter aurescens (strain TC1).